The chain runs to 329 residues: Flotillin-like protein FloA (329 aa).

2 helical membrane-spanning segments follow: residues 4–24 (IAFI…FAIV) and 26–46 (VGLW…TLIG).

The protein belongs to the flotillin-like FloA family. As to quaternary structure, homooligomerizes.

The protein localises to the cell membrane. It is found in the membrane raft. Found in functional membrane microdomains (FMM) that may be equivalent to eukaryotic membrane rafts. FMMs are highly dynamic and increase in number as cells age. Flotillins are thought to be important factors in membrane fluidity. The sequence is that of Flotillin-like protein FloA from Acetivibrio thermocellus (strain ATCC 27405 / DSM 1237 / JCM 9322 / NBRC 103400 / NCIMB 10682 / NRRL B-4536 / VPI 7372) (Clostridium thermocellum).